The following is a 345-amino-acid chain: 4-hydroxyproline 2-epimerase (345 aa).

Gln-85 is a substrate binding site. Catalysis depends on Ser-93, which acts as the Proton acceptor. Residues Gly-94–Ser-95 and Asp-251 each bind substrate. Cys-255 acts as the Proton donor in catalysis. Gly-256–Thr-257 is a substrate binding site.

This sequence belongs to the proline racemase family.

The catalysed reaction is trans-4-hydroxy-L-proline = cis-4-hydroxy-D-proline. Functionally, catalyzes the epimerization of trans-4-hydroxy-L-proline (t4LHyp) to cis-4-hydroxy-D-proline (c4DHyp). May be involved in a degradation pathway of t4LHyp, which would allow A.tumefaciens to grow on t4LHyp as a sole carbon source. Can also catalyze the epimerization of trans-3-hydroxy-L-proline (t3LHyp) to cis-3-hydroxy-D-proline (c3DHyp) in vitro. Displays no proline racemase activity. The sequence is that of 4-hydroxyproline 2-epimerase from Agrobacterium fabrum (strain C58 / ATCC 33970) (Agrobacterium tumefaciens (strain C58)).